The primary structure comprises 274 residues: Eukaryotic translation initiation factor 3 subunit G-2 (274 aa).

Residues 194–272 (SAVRISNLSE…LILCVEWSKP (79 aa)) form the RRM domain.

The protein belongs to the eIF-3 subunit G family. In terms of assembly, component of the eukaryotic translation initiation factor 3 (eIF-3) complex. The eIF-3 complex interacts with pix.

The protein resides in the cytoplasm. In terms of biological role, RNA-binding component of the eukaryotic translation initiation factor 3 (eIF-3) complex, which is involved in protein synthesis of a specialized repertoire of mRNAs and, together with other initiation factors, stimulates binding of mRNA and methionyl-tRNAi to the 40S ribosome. The eIF-3 complex specifically targets and initiates translation of a subset of mRNAs involved in cell proliferation. This subunit can bind 18S rRNA. This Drosophila pseudoobscura pseudoobscura (Fruit fly) protein is Eukaryotic translation initiation factor 3 subunit G-2.